The sequence spans 259 residues: 7alpha-hydroxysteroid dehydrogenase (259 aa).

NAD(+) contacts are provided by residues Ile-18, 37 to 38, and Asn-90; that span reads DY. Positions 145 and 158 each coordinate glycochenodeoxycholate. NAD(+)-binding positions include Tyr-158, Lys-162, and 191–193; that span reads ILT. The active-site Proton acceptor is Tyr-158.

This sequence belongs to the short-chain dehydrogenases/reductases (SDR) family. In terms of assembly, homotetramer.

The enzyme catalyses cholate + NAD(+) = 3alpha,12alpha-dihydroxy-7-oxo-5beta-cholanate + NADH + H(+). It catalyses the reaction chenodeoxycholate + NAD(+) = 7-oxolithocholate + NADH + H(+). It carries out the reaction taurochenodeoxycholate + NAD(+) = 7-oxotaurolithocholate + NADH + H(+). The catalysed reaction is glycochenodeoxycholate + NAD(+) = 7-oxoglycolithocholate + NADH + H(+). The enzyme catalyses taurocholate + NAD(+) = 7-oxo-taurodeoxycholate + NADH + H(+). It catalyses the reaction glycocholate + NAD(+) = 7-oxo-glycodeoxycholate + NADH + H(+). It carries out the reaction an aromatic primary alcohol + NAD(+) = an aromatic aldehyde + NADH + H(+). The catalysed reaction is benzyl alcohol + NAD(+) = benzaldehyde + NADH + H(+). The enzyme catalyses 4-cyanobenzyl alcohol + NAD(+) = 4-cyanobenzaldehyde + NADH + H(+). It catalyses the reaction 4-acetoxybenzyl alcohol + NAD(+) = 4-acetoxybenzaldehyde + NADH + H(+). It carries out the reaction 4-(trifluoromethyl)benzyl alcohol + NAD(+) = 4-(trifluoromethyl)benzaldehyde + NADH + H(+). Functionally, 7alpha-hydroxysteroid dehydrogenase involved in the metabolism of bile acids in the gut. Catalyzes the NAD(+)-dependent oxidation of the 7alpha-hydroxy group of 7alpha-hydroxysteroids, such as cholate, chenodeoxycholate, taurochenodeoxycholate, glycochenodeoxycholate, taurocholate and glycocholate, to the corresponding 7-oxosteroids. Since it is also able to catalyze the reduction of nonsteroidal carbonyl compounds such as various benzaldehyde analogs to their corresponding benzyl alcohols, this enzyme may also function in the detoxification of xenobiotics containing carbonyl groups in the large intestine. This chain is 7alpha-hydroxysteroid dehydrogenase, found in Bacteroides fragilis (strain ATCC 25285 / DSM 2151 / CCUG 4856 / JCM 11019 / LMG 10263 / NCTC 9343 / Onslow / VPI 2553 / EN-2).